The following is a 273-amino-acid chain: Glutamate racemase (273 aa).

Substrate contacts are provided by residues 9 to 10 (DS) and 41 to 42 (YG). The active-site Proton donor/acceptor is C73. A substrate-binding site is contributed by 74-75 (NT). Residue C183 is the Proton donor/acceptor of the active site. 184–185 (TH) contributes to the substrate binding site.

It belongs to the aspartate/glutamate racemases family.

It carries out the reaction L-glutamate = D-glutamate. It participates in cell wall biogenesis; peptidoglycan biosynthesis. Its function is as follows. Provides the (R)-glutamate required for cell wall biosynthesis. The sequence is that of Glutamate racemase from Shewanella sp. (strain ANA-3).